We begin with the raw amino-acid sequence, 351 residues long: Outer membrane porin PhoE (351 aa).

The signal sequence occupies residues 1–21 (MKKSTLALVVMGIVASASVQA).

The protein belongs to the Gram-negative porin family. As to quaternary structure, homotrimer. Forms mixed heterotrimers with OmpC and with OmpF; other mixed heterotrimers are also probable.

The protein localises to the cell outer membrane. In terms of biological role, uptake of inorganic phosphate, phosphorylated compounds, and some other negatively charged solutes. This is Outer membrane porin PhoE (phoE) from Escherichia coli (strain K12).